We begin with the raw amino-acid sequence, 184 residues long: ATP-dependent protease subunit HslV (184 aa).

Residue T12 is part of the active site. Na(+) contacts are provided by A166, C169, and T172.

This sequence belongs to the peptidase T1B family. HslV subfamily. In terms of assembly, a double ring-shaped homohexamer of HslV is capped on each side by a ring-shaped HslU homohexamer. The assembly of the HslU/HslV complex is dependent on binding of ATP.

The protein resides in the cytoplasm. It catalyses the reaction ATP-dependent cleavage of peptide bonds with broad specificity.. With respect to regulation, allosterically activated by HslU binding. Protease subunit of a proteasome-like degradation complex believed to be a general protein degrading machinery. The sequence is that of ATP-dependent protease subunit HslV from Brucella canis (strain ATCC 23365 / NCTC 10854 / RM-666).